The sequence spans 339 residues: U11/U12 small nuclear ribonucleoprotein 48 kDa protein (339 aa).

A CHHC U11-48K-type zinc finger spans residues 55–82 (VVICPYDSNHHMPKSSLAKHMASCRLRK). C58, H64, H74, and C78 together coordinate Zn(2+). Glycyl lysine isopeptide (Lys-Gly) (interchain with G-Cter in SUMO2) cross-links involve residues K87 and K104. The disordered stretch occupies residues 255-339 (HWQEEQEKAE…HSHKRRKQKI (85 aa)). Over residues 294–309 (RHRRDRSRSPHKRKRN) the composition is skewed to basic residues. The segment covering 310 to 328 (KDKDKNCESRRRKERDGER) has biased composition (basic and acidic residues). Basic residues predominate over residues 329-339 (HHSHKRRKQKI).

Component of the U11/U12 snRNPs that are part of the U12-type spliceosome. Not found in the major spliceosome.

It is found in the nucleus. In terms of biological role, likely involved in U12-type 5' splice site recognition. In Homo sapiens (Human), this protein is U11/U12 small nuclear ribonucleoprotein 48 kDa protein (SNRNP48).